The chain runs to 148 residues: Urease accessory protein UreE (148 aa).

Belongs to the UreE family.

It localises to the cytoplasm. Its function is as follows. Involved in urease metallocenter assembly. Binds nickel. Probably functions as a nickel donor during metallocenter assembly. The sequence is that of Urease accessory protein UreE from Lysinibacillus sphaericus (strain C3-41).